A 157-amino-acid chain; its full sequence is Large ribosomal subunit protein uL11 (157 aa).

This sequence belongs to the universal ribosomal protein uL11 family.

This protein binds directly to 26S ribosomal RNA. This chain is Large ribosomal subunit protein uL11 (RPL12), found in Chlamydomonas reinhardtii (Chlamydomonas smithii).